A 623-amino-acid chain; its full sequence is Putative ABC transporter ATP-binding protein MG014 (623 aa).

Positions 16–325 constitute an ABC transmembrane type-1 domain; the sequence is LILAPFFTFA…YIVLGFILTS (310 aa). 6 consecutive transmembrane segments (helical) span residues 27 to 47, 81 to 101, 157 to 177, 181 to 201, 266 to 286, and 307 to 327; these read IVIDLIIPSFLASAISVVFSI, VLATTVILLALCGLFFGLISI, FLRLIIRAPLLFIGGLVFAVT, DMSISLLITFPLILLVIGILN, NIPFTFFLSSLTIIIALLLVF, and IFAFFQYNFYIVLGFILTSLT. The region spanning 365–611 is the ABC transporter domain; it reads LEFRNISFGL…CSLYQKMKES (247 aa). An ATP-binding site is contributed by 400 to 407; sequence GPTGSGKS.

The protein belongs to the ABC transporter superfamily.

The protein localises to the cell membrane. The polypeptide is Putative ABC transporter ATP-binding protein MG014 (Mycoplasma genitalium (strain ATCC 33530 / DSM 19775 / NCTC 10195 / G37) (Mycoplasmoides genitalium)).